A 137-amino-acid chain; its full sequence is Peptide methionine sulfoxide reductase MsrB (137 aa).

Residues 7–129 (PTENIEKLTD…NSASLNFVDD (123 aa)) enclose the MsrB domain. Positions 46, 49, 95, and 98 each coordinate Zn(2+). The active-site Nucleophile is Cys-118.

This sequence belongs to the MsrB Met sulfoxide reductase family. Zn(2+) serves as cofactor.

The enzyme catalyses L-methionyl-[protein] + [thioredoxin]-disulfide + H2O = L-methionyl-(R)-S-oxide-[protein] + [thioredoxin]-dithiol. This is Peptide methionine sulfoxide reductase MsrB from Yersinia enterocolitica serotype O:8 / biotype 1B (strain NCTC 13174 / 8081).